Reading from the N-terminus, the 371-residue chain is Putative RNA-binding protein Luc7-like 1 (371 aa).

2 coiled-coil regions span residues 87–177 (MDHL…RNSM) and 220–256 (QIRE…EERL). Residues 232–257 (VAEKQEKRNQDRLRRREEREREERLG) are compositionally biased toward basic and acidic residues. The disordered stretch occupies residues 232–371 (VAEKQEKRNQ…RSEEKEAGEI (140 aa)). A compositionally biased stretch (basic residues) spans 258 to 317 (RRSGSRTRDRRRSRSRDRRRRRSRSTSRERRKFSRSRSRDRYRRHRSRSRSHSRGHRRAS). 2 stretches are compositionally biased toward basic and acidic residues: residues 318-351 (RDRS…DWRL) and 361-371 (RRSEEKEAGEI). Phosphoserine is present on residues S336 and S363.

This sequence belongs to the Luc7 family.

Functionally, may bind to RNA via its Arg/Ser-rich domain. This Mus musculus (Mouse) protein is Putative RNA-binding protein Luc7-like 1 (Luc7l).